We begin with the raw amino-acid sequence, 65 residues long: Disintegrin CC8B (65 aa).

The Disintegrin domain maps to 1–65 (NSAHPCCDPV…DCPRNPWHKS (65 aa)). Disulfide bonds link C6–C29, C20–C26, C25–C50, and C38–C57. Positions 42 to 44 (WGD) match the Cell attachment site; atypical (WGD) motif.

This sequence belongs to the disintegrin family. Dimeric disintegrin subfamily. Heterodimer with CC8A; disulfide-linked. In terms of tissue distribution, expressed by the venom gland.

The protein localises to the secreted. Functionally, inhibits integrins alpha-IIb/beta-3 (ITGA2B/ITGB3), alpha-V/beta-3 (ITGAV/ITGB3), and alpha-5/beta-1 (ITGA5/ITGB1). This chain is Disintegrin CC8B, found in Cerastes cerastes (Horned desert viper).